A 146-amino-acid chain; its full sequence is Cyanate hydratase (146 aa).

Active-site residues include Arg-87, Glu-90, and Ser-113.

Belongs to the cyanase family.

It catalyses the reaction cyanate + hydrogencarbonate + 3 H(+) = NH4(+) + 2 CO2. In terms of biological role, catalyzes the reaction of cyanate with bicarbonate to produce ammonia and carbon dioxide. In Teredinibacter turnerae (strain ATCC 39867 / T7901), this protein is Cyanate hydratase.